The following is a 218-amino-acid chain: GTP cyclohydrolase 1 (218 aa).

C109, H112, and C180 together coordinate Zn(2+).

This sequence belongs to the GTP cyclohydrolase I family. As to quaternary structure, toroid-shaped homodecamer, composed of two pentamers of five dimers.

The catalysed reaction is GTP + H2O = 7,8-dihydroneopterin 3'-triphosphate + formate + H(+). It functions in the pathway cofactor biosynthesis; 7,8-dihydroneopterin triphosphate biosynthesis; 7,8-dihydroneopterin triphosphate from GTP: step 1/1. The polypeptide is GTP cyclohydrolase 1 (Mannheimia succiniciproducens (strain KCTC 0769BP / MBEL55E)).